The primary structure comprises 242 residues: Tyrosine recombinase XerD-like (242 aa).

The 71-residue stretch at 1–71 (MKEAIDQFIQ…AVNQFLYFLY (71 aa)) folds into the Core-binding (CB) domain. Residues 90 to 242 (ENSSQGSLLD…KSITTLEKYR (153 aa)) form the Tyr recombinase domain. Active-site residues include lysine 148 and arginine 209. Tyrosine 241 (O-(3'-phospho-DNA)-tyrosine intermediate) is an active-site residue.

Belongs to the 'phage' integrase family. XerD-like subfamily.

The protein localises to the cytoplasm. Putative tyrosine recombinase. Not involved in the cutting and rejoining of the recombining DNA molecules on dif(SL) site. In Streptococcus gordonii (strain Challis / ATCC 35105 / BCRC 15272 / CH1 / DL1 / V288), this protein is Tyrosine recombinase XerD-like.